A 166-amino-acid chain; its full sequence is NAD(P)H-quinone oxidoreductase subunit I, chloroplastic (166 aa).

2 4Fe-4S ferredoxin-type domains span residues 55-84 (GRIH…VDWK) and 95-124 (LNYS…MTEE). Positions 64, 67, 70, 74, 104, 107, 110, and 114 each coordinate [4Fe-4S] cluster.

This sequence belongs to the complex I 23 kDa subunit family. NDH is composed of at least 16 different subunits, 5 of which are encoded in the nucleus. The cofactor is [4Fe-4S] cluster.

The protein resides in the plastid. It is found in the chloroplast thylakoid membrane. It catalyses the reaction a plastoquinone + NADH + (n+1) H(+)(in) = a plastoquinol + NAD(+) + n H(+)(out). It carries out the reaction a plastoquinone + NADPH + (n+1) H(+)(in) = a plastoquinol + NADP(+) + n H(+)(out). NDH shuttles electrons from NAD(P)H:plastoquinone, via FMN and iron-sulfur (Fe-S) centers, to quinones in the photosynthetic chain and possibly in a chloroplast respiratory chain. The immediate electron acceptor for the enzyme in this species is believed to be plastoquinone. Couples the redox reaction to proton translocation, and thus conserves the redox energy in a proton gradient. In Oblivia mikanioides (Salmea mikanioides), this protein is NAD(P)H-quinone oxidoreductase subunit I, chloroplastic.